A 102-amino-acid chain; its full sequence is 10 kDa heat shock protein, mitochondrial (102 aa).

A2 carries the post-translational modification N-acetylalanine. K8 is subject to N6-acetyllysine. K28 bears the N6-succinyllysine mark. K40 is modified (N6-acetyllysine; alternate). An N6-malonyllysine; alternate mark is found at K40, K54, and K56. N6-succinyllysine; alternate is present on residues K40, K54, K56, K66, and K70. N6-acetyllysine; alternate occurs at positions 56, 66, and 70. T79 carries the phosphothreonine modification. N6-acetyllysine; alternate is present on residues K80 and K86. An N6-succinyllysine; alternate mark is found at K80 and K86. K99 bears the N6-acetyllysine mark.

The protein belongs to the GroES chaperonin family. Homoheptamer arranged in a ring structure. 2 heptameric Hsp10 rings interact with a Hsp60 tetradecamer in the structure of a back-to-back double heptameric ring to form the symmetrical football complex.

The protein resides in the mitochondrion matrix. In terms of biological role, co-chaperonin implicated in mitochondrial protein import and macromolecular assembly. Together with Hsp60, facilitates the correct folding of imported proteins. May also prevent misfolding and promote the refolding and proper assembly of unfolded polypeptides generated under stress conditions in the mitochondrial matrix. The functional units of these chaperonins consist of heptameric rings of the large subunit Hsp60, which function as a back-to-back double ring. In a cyclic reaction, Hsp60 ring complexes bind one unfolded substrate protein per ring, followed by the binding of ATP and association with 2 heptameric rings of the co-chaperonin Hsp10. This leads to sequestration of the substrate protein in the inner cavity of Hsp60 where, for a certain period of time, it can fold undisturbed by other cell components. Synchronous hydrolysis of ATP in all Hsp60 subunits results in the dissociation of the chaperonin rings and the release of ADP and the folded substrate protein. This Rattus norvegicus (Rat) protein is 10 kDa heat shock protein, mitochondrial (Hspe1).